The chain runs to 166 residues: Putative transmembrane protein encoded by LINC00477 (166 aa).

A glycan (N-linked (GlcNAc...) asparagine) is linked at asparagine 7. The next 3 membrane-spanning stretches (helical) occupy residues 15–35 (VSSF…FFLC), 41–61 (MTGC…VLGP), and 63–83 (PMGM…RFLG). The segment at 127–166 (LPVPHPPSPLSKCPQHPRPRRTKGPGLRKLWGPGPPFFPS) is disordered.

It localises to the membrane. The sequence is that of Putative transmembrane protein encoded by LINC00477 (LINC00477) from Homo sapiens (Human).